The chain runs to 131 residues: Proteinase inhibitor (131 aa).

Positions 1 to 26 (MSASAKLSRMVCLLCGFFSTGISMAS) are cleaved as a signal peptide. Cys-51 and Cys-74 are oxidised to a cystine.

This sequence belongs to the protease inhibitor I38 family.

The protein localises to the periplasm. Functionally, inhibitor of the alkaline protease. It forms a non-covalent bond with the protease and may prevent its autocatalytic cleavage in the periplasm. The protein is Proteinase inhibitor (inh) of Pseudomonas aeruginosa (strain ATCC 15692 / DSM 22644 / CIP 104116 / JCM 14847 / LMG 12228 / 1C / PRS 101 / PAO1).